Consider the following 186-residue polypeptide: Zinc finger AN1 domain-containing stress-associated protein 12 (186 aa).

AN1-type zinc fingers lie at residues 10–58 (PDLG…HGSR) and 97–147 (KKKK…INTA). 16 residues coordinate Zn(2+): C16, C21, C31, C34, C39, H42, H48, C50, C103, C108, C120, C123, C128, H131, H137, and C139. The segment at 167–186 (KGCGRGSSVSSKSSPSVRSF) is disordered. The span at 172–186 (GSSVSSKSSPSVRSF) shows a compositional bias: low complexity.

Its function is as follows. May be involved in environmental stress response. The protein is Zinc finger AN1 domain-containing stress-associated protein 12 (SAP12) of Arabidopsis thaliana (Mouse-ear cress).